Consider the following 433-residue polypeptide: Glucose-1-phosphate adenylyltransferase (433 aa).

Residues Y117, G182, 197–198, and S215 each bind alpha-D-glucose 1-phosphate; that span reads EK.

This sequence belongs to the bacterial/plant glucose-1-phosphate adenylyltransferase family. As to quaternary structure, homotetramer.

It carries out the reaction alpha-D-glucose 1-phosphate + ATP + H(+) = ADP-alpha-D-glucose + diphosphate. Its pathway is glycan biosynthesis; glycogen biosynthesis. In terms of biological role, involved in the biosynthesis of ADP-glucose, a building block required for the elongation reactions to produce glycogen. Catalyzes the reaction between ATP and alpha-D-glucose 1-phosphate (G1P) to produce pyrophosphate and ADP-Glc. The polypeptide is Glucose-1-phosphate adenylyltransferase (Nitrosomonas europaea (strain ATCC 19718 / CIP 103999 / KCTC 2705 / NBRC 14298)).